The primary structure comprises 212 residues: Uridine kinase (212 aa).

G13–S20 serves as a coordination point for ATP.

This sequence belongs to the uridine kinase family.

The protein localises to the cytoplasm. It catalyses the reaction uridine + ATP = UMP + ADP + H(+). The enzyme catalyses cytidine + ATP = CMP + ADP + H(+). The protein operates within pyrimidine metabolism; CTP biosynthesis via salvage pathway; CTP from cytidine: step 1/3. It functions in the pathway pyrimidine metabolism; UMP biosynthesis via salvage pathway; UMP from uridine: step 1/1. In Shewanella denitrificans (strain OS217 / ATCC BAA-1090 / DSM 15013), this protein is Uridine kinase.